The sequence spans 149 residues: UPF0178 protein lwe1471 (149 aa).

Belongs to the UPF0178 family.

This is UPF0178 protein lwe1471 from Listeria welshimeri serovar 6b (strain ATCC 35897 / DSM 20650 / CCUG 15529 / CIP 8149 / NCTC 11857 / SLCC 5334 / V8).